A 606-amino-acid chain; its full sequence is Homeobox protein B-H1 (606 aa).

Positions 1–14 (MKDSMSILTQTPSE) are enriched in polar residues. Disordered stretches follow at residues 1–65 (MKDS…PAVA), 104–188 (YKQQ…HPHA), 261–340 (APAG…AFTD), and 508–606 (AAAN…QIQV). Positions 21–40 (QLHHHLSHHHHPALHHHPVL) are enriched in basic residues. Residues 41 to 65 (QHHYSLQQQHQQQQQQQPPAPPAVA) are compositionally biased toward low complexity. Basic residues predominate over residues 108 to 118 (QQHHHHHHQSH). Low complexity predominate over residues 119–138 (HNNNNHSGGSSGGTSPTHHN). Positions 166–188 (HHLHPQSHPHPHPHPHSHPHPHA) are enriched in basic residues. A compositionally biased stretch (acidic residues) spans 266-284 (ELDDSSDYHEENEDCDSDE). The span at 286–295 (GSAGGGGGGS) shows a compositional bias: gly residues. The span at 297-314 (HMDDHSVCSNGGKDDDGN) shows a compositional bias: basic and acidic residues. Residues 315–325 (SIKSGSTSDMS) are compositionally biased toward polar residues. The segment at residues 331–390 (QRKARTAFTDHQLQTLEKSFERQKYLSVQERQELAHKLDLSDCQVKTWYQNRRTKWMRQT) is a DNA-binding region (homeobox). The span at 513–522 (GGPPPPPPPS) shows a compositional bias: pro residues. Residues 523–534 (SAAAATGGSPSP) show a composition bias toward low complexity. The span at 561–576 (ASPPLPLPLARPPSTP) shows a compositional bias: pro residues.

Belongs to the Antp homeobox family. Abundant in the eye-antenna imaginal disk.

The protein resides in the nucleus. In terms of biological role, functionally required in R1 and R6 receptor cells and primary pigment cells for normal eye development. The sequence is that of Homeobox protein B-H1 (B-H1) from Drosophila ananassae (Fruit fly).